The sequence spans 405 residues: Tryptophan synthase beta chain (405 aa).

Lysine 98 carries the post-translational modification N6-(pyridoxal phosphate)lysine.

This sequence belongs to the TrpB family. As to quaternary structure, tetramer of two alpha and two beta chains. The cofactor is pyridoxal 5'-phosphate.

The catalysed reaction is (1S,2R)-1-C-(indol-3-yl)glycerol 3-phosphate + L-serine = D-glyceraldehyde 3-phosphate + L-tryptophan + H2O. It participates in amino-acid biosynthesis; L-tryptophan biosynthesis; L-tryptophan from chorismate: step 5/5. Functionally, the beta subunit is responsible for the synthesis of L-tryptophan from indole and L-serine. The protein is Tryptophan synthase beta chain of Xanthomonas campestris pv. campestris (strain 8004).